The following is a 1038-amino-acid chain: Inner tegument protein (1038 aa).

The segment at 545 to 1038 (WGITPPVDVG…VPGNTSGSDP (494 aa)) is interaction with large tegument protein.

The protein belongs to the herpesviridae inner tegument protein family. In terms of assembly, interacts (via C-terminus) with the large tegument protein/LTP (via N-terminus).

It localises to the virion tegument. Its subcellular location is the host cytoplasm. The protein localises to the host nucleus. It is found in the host Golgi apparatus. The protein resides in the host trans-Golgi network. Plays an essential role in cytoplasmic secondary envelopment during viral egress. Interacts with the capsid via the large tegument protein/LTP and participates in its transport to the host trans-Golgi network (TGN) where secondary envelopment occurs. Modulates tegumentation and capsid accumulation at the viral assembly complex. The protein is Inner tegument protein (21) of Homo sapiens (Human).